Here is a 195-residue protein sequence, read N- to C-terminus: Phosphoheptose isomerase (195 aa).

Residues 37–195 (ISDSFKQHGK…IEFEMAKIRQ (159 aa)) form the SIS domain. Substrate is bound at residue 52–54 (NGG). Zn(2+)-binding residues include His-61 and Glu-65. Substrate is bound by residues Glu-65, 93–94 (ND), 119–121 (STS), Ser-124, and Gln-172. Zn(2+)-binding residues include Gln-172 and His-180.

This sequence belongs to the SIS family. GmhA subfamily. In terms of assembly, homotetramer. Requires Zn(2+) as cofactor.

The protein resides in the cytoplasm. It carries out the reaction 2 D-sedoheptulose 7-phosphate = D-glycero-alpha-D-manno-heptose 7-phosphate + D-glycero-beta-D-manno-heptose 7-phosphate. The protein operates within carbohydrate biosynthesis; D-glycero-D-manno-heptose 7-phosphate biosynthesis; D-glycero-alpha-D-manno-heptose 7-phosphate and D-glycero-beta-D-manno-heptose 7-phosphate from sedoheptulose 7-phosphate: step 1/1. Its function is as follows. Catalyzes the isomerization of sedoheptulose 7-phosphate in D-glycero-D-manno-heptose 7-phosphate. This Histophilus somni (strain 2336) (Haemophilus somnus) protein is Phosphoheptose isomerase.